The primary structure comprises 84 residues: UPF0298 protein NWMN_0985 (84 aa).

Belongs to the UPF0298 family.

Its subcellular location is the cytoplasm. The polypeptide is UPF0298 protein NWMN_0985 (Staphylococcus aureus (strain Newman)).